A 177-amino-acid polypeptide reads, in one-letter code: RNA pyrophosphohydrolase (177 aa).

The Nudix hydrolase domain maps to 6–149; the sequence is GYRPNVGIVI…KRDVYRRVMK (144 aa). The Nudix box motif lies at 38–59; that stretch reads GGINAGETAEQAMYRELFEEVG.

The protein belongs to the Nudix hydrolase family. RppH subfamily. A divalent metal cation serves as cofactor.

In terms of biological role, accelerates the degradation of transcripts by removing pyrophosphate from the 5'-end of triphosphorylated RNA, leading to a more labile monophosphorylated state that can stimulate subsequent ribonuclease cleavage. In Edwardsiella ictaluri (strain 93-146), this protein is RNA pyrophosphohydrolase.